The sequence spans 400 residues: CCA-adding enzyme (400 aa).

The ATP site is built by Gly8 and Arg11. Gly8 and Arg11 together coordinate CTP. Positions 21 and 23 each coordinate Mg(2+). ATP contacts are provided by Arg91, Arg137, and Arg140. Arg91, Arg137, and Arg140 together coordinate CTP. The HD domain occupies 217 to 322 (NFQYAMTALK…IDLFNKWDVW (106 aa)).

The protein belongs to the tRNA nucleotidyltransferase/poly(A) polymerase family. Bacterial CCA-adding enzyme type 2 subfamily. Mg(2+) is required as a cofactor.

The catalysed reaction is a tRNA precursor + 2 CTP + ATP = a tRNA with a 3' CCA end + 3 diphosphate. It carries out the reaction a tRNA with a 3' CCA end + 2 CTP + ATP = a tRNA with a 3' CCACCA end + 3 diphosphate. Catalyzes the addition and repair of the essential 3'-terminal CCA sequence in tRNAs without using a nucleic acid template. Adds these three nucleotides in the order of C, C, and A to the tRNA nucleotide-73, using CTP and ATP as substrates and producing inorganic pyrophosphate. tRNA 3'-terminal CCA addition is required both for tRNA processing and repair. Also involved in tRNA surveillance by mediating tandem CCA addition to generate a CCACCA at the 3' terminus of unstable tRNAs. While stable tRNAs receive only 3'-terminal CCA, unstable tRNAs are marked with CCACCA and rapidly degraded. In Actinobacillus succinogenes (strain ATCC 55618 / DSM 22257 / CCUG 43843 / 130Z), this protein is CCA-adding enzyme.